The primary structure comprises 242 residues: uncharacterized protein (242 aa).

This sequence to E.coli MazG and to plasmid pIP1100 erythromycin esterase.

This is an uncharacterized protein from Streptomyces cacaoi.